A 162-amino-acid chain; its full sequence is Putative pre-16S rRNA nuclease (162 aa).

The protein belongs to the YqgF nuclease family.

The protein localises to the cytoplasm. Its function is as follows. Could be a nuclease involved in processing of the 5'-end of pre-16S rRNA. In Brucella melitensis biotype 2 (strain ATCC 23457), this protein is Putative pre-16S rRNA nuclease.